A 178-amino-acid polypeptide reads, in one-letter code: Putative magnesium-dependent phosphatase YER134C (178 aa).

The active-site Nucleophile is Asp-11. Asp-11 is a binding site for Mg(2+). The phosphate site is built by Leu-12, Asp-13, Ser-74, and Arg-75. A Mg(2+)-binding site is contributed by Asp-13. Asp-13 (proton donor) is an active-site residue. Arg-75 contributes to the substrate binding site. Asp-141 is a binding site for Mg(2+).

The protein belongs to the HAD-like hydrolase superfamily.

The protein resides in the cytoplasm. The protein localises to the nucleus. It catalyses the reaction O-phospho-L-tyrosyl-[protein] + H2O = L-tyrosyl-[protein] + phosphate. In terms of biological role, magnesium-dependent phosphatase which may act as a tyrosine phosphatase. The chain is Putative magnesium-dependent phosphatase YER134C from Saccharomyces cerevisiae (strain ATCC 204508 / S288c) (Baker's yeast).